Reading from the N-terminus, the 398-residue chain is S-adenosylmethionine synthase (398 aa).

Histidine 17 contacts ATP. Aspartate 19 is a binding site for Mg(2+). A K(+)-binding site is contributed by glutamate 45. L-methionine is bound by residues glutamate 58 and glutamine 101. Positions 101-111 are flexible loop; sequence QSPDIAQGVDK. Residues 176–178, 243–244, aspartate 252, 258–259, and lysine 279 contribute to the ATP site; these read DGK, RF, and RK. L-methionine is bound at residue aspartate 252. Lysine 283 is an L-methionine binding site.

This sequence belongs to the AdoMet synthase family. Homotetramer; dimer of dimers. Requires Mg(2+) as cofactor. K(+) serves as cofactor.

The protein localises to the cytoplasm. It carries out the reaction L-methionine + ATP + H2O = S-adenosyl-L-methionine + phosphate + diphosphate. It participates in amino-acid biosynthesis; S-adenosyl-L-methionine biosynthesis; S-adenosyl-L-methionine from L-methionine: step 1/1. Its function is as follows. Catalyzes the formation of S-adenosylmethionine (AdoMet) from methionine and ATP. The overall synthetic reaction is composed of two sequential steps, AdoMet formation and the subsequent tripolyphosphate hydrolysis which occurs prior to release of AdoMet from the enzyme. The protein is S-adenosylmethionine synthase of Staphylococcus haemolyticus (strain JCSC1435).